A 96-amino-acid polypeptide reads, in one-letter code: Small ribosomal subunit protein bS18 (96 aa).

This sequence belongs to the bacterial ribosomal protein bS18 family. In terms of assembly, part of the 30S ribosomal subunit. Forms a tight heterodimer with protein bS6.

Functionally, binds as a heterodimer with protein bS6 to the central domain of the 16S rRNA, where it helps stabilize the platform of the 30S subunit. The chain is Small ribosomal subunit protein bS18 from Gluconobacter oxydans (strain 621H) (Gluconobacter suboxydans).